A 294-amino-acid polypeptide reads, in one-letter code: Phosphatidylserine decarboxylase proenzyme (294 aa).

Active-site charge relay system; for autoendoproteolytic cleavage activity residues include aspartate 100, histidine 157, and serine 261. Catalysis depends on serine 261, which acts as the Schiff-base intermediate with substrate; via pyruvic acid; for decarboxylase activity. A Pyruvic acid (Ser); by autocatalysis modification is found at serine 261.

It belongs to the phosphatidylserine decarboxylase family. PSD-B subfamily. Prokaryotic type I sub-subfamily. As to quaternary structure, heterodimer of a large membrane-associated beta subunit and a small pyruvoyl-containing alpha subunit. The cofactor is pyruvate. Post-translationally, is synthesized initially as an inactive proenzyme. Formation of the active enzyme involves a self-maturation process in which the active site pyruvoyl group is generated from an internal serine residue via an autocatalytic post-translational modification. Two non-identical subunits are generated from the proenzyme in this reaction, and the pyruvate is formed at the N-terminus of the alpha chain, which is derived from the carboxyl end of the proenzyme. The autoendoproteolytic cleavage occurs by a canonical serine protease mechanism, in which the side chain hydroxyl group of the serine supplies its oxygen atom to form the C-terminus of the beta chain, while the remainder of the serine residue undergoes an oxidative deamination to produce ammonia and the pyruvoyl prosthetic group on the alpha chain. During this reaction, the Ser that is part of the protease active site of the proenzyme becomes the pyruvoyl prosthetic group, which constitutes an essential element of the active site of the mature decarboxylase.

It is found in the cell membrane. It carries out the reaction a 1,2-diacyl-sn-glycero-3-phospho-L-serine + H(+) = a 1,2-diacyl-sn-glycero-3-phosphoethanolamine + CO2. Its pathway is phospholipid metabolism; phosphatidylethanolamine biosynthesis; phosphatidylethanolamine from CDP-diacylglycerol: step 2/2. Its function is as follows. Catalyzes the formation of phosphatidylethanolamine (PtdEtn) from phosphatidylserine (PtdSer). In Histophilus somni (strain 129Pt) (Haemophilus somnus), this protein is Phosphatidylserine decarboxylase proenzyme.